The chain runs to 184 residues: Ribosome-recycling factor (184 aa).

It belongs to the RRF family.

It is found in the cytoplasm. In terms of biological role, responsible for the release of ribosomes from messenger RNA at the termination of protein biosynthesis. May increase the efficiency of translation by recycling ribosomes from one round of translation to another. This is Ribosome-recycling factor from Stenotrophomonas maltophilia (strain R551-3).